Consider the following 251-residue polypeptide: Coproheme decarboxylase (251 aa).

Fe-coproporphyrin III-binding positions include R133, Y147–K151, H174, Q187, and S225. Y147 is a catalytic residue.

The protein belongs to the ChdC family. Type 1 subfamily. Fe-coproporphyrin III serves as cofactor.

It catalyses the reaction Fe-coproporphyrin III + 2 H2O2 + 2 H(+) = heme b + 2 CO2 + 4 H2O. The enzyme catalyses Fe-coproporphyrin III + H2O2 + H(+) = harderoheme III + CO2 + 2 H2O. It carries out the reaction harderoheme III + H2O2 + H(+) = heme b + CO2 + 2 H2O. Its pathway is porphyrin-containing compound metabolism; protoheme biosynthesis. In terms of biological role, involved in coproporphyrin-dependent heme b biosynthesis. Catalyzes the decarboxylation of Fe-coproporphyrin III (coproheme) to heme b (protoheme IX), the last step of the pathway. The reaction occurs in a stepwise manner with a three-propionate intermediate. The protein is Coproheme decarboxylase of Listeria innocua serovar 6a (strain ATCC BAA-680 / CLIP 11262).